The primary structure comprises 117 residues: Envelope glycoprotein J (117 aa).

Residues 1-26 (MRSLLFVVGAWVAAAVTHLTPNAALA) form the signal peptide. Positions 26 to 64 (ATGTTPTVGANSTADPGTGANGTTVPAAGTPANSTTAAE) are disordered. A compositionally biased stretch (polar residues) spans 27–40 (TGTTPTVGANSTAD). The Extracellular segment spans residues 27-73 (TGTTPTVGANSTADPGTGANGTTVPAAGTPANSTTAAETPAPFPPVD). Asparagine 36, asparagine 46, and asparagine 58 each carry an N-linked (GlcNAc...) asparagine; by host glycan. Residues 74 to 94 (FALPVVIGGLCALTLAAMGAG) form a helical membrane-spanning segment. The Cytoplasmic portion of the chain corresponds to 95 to 117 (ALLHRCCRRAAARRRQRAAYVYA).

Belongs to the alphaherpesvirinae glycoprotein J family.

It is found in the host Golgi apparatus membrane. The protein localises to the host endoplasmic reticulum membrane. The protein resides in the host endosome membrane. Inhibits host cell apoptosis. Induces an increase in reactive oxygen species (ROS) in the host cell. In Homo sapiens (Human), this protein is Envelope glycoprotein J (gJ).